We begin with the raw amino-acid sequence, 399 residues long: Aspartate aminotransferase (399 aa).

Positions 42 and 179 each coordinate L-aspartate. Residue K240 is modified to N6-(pyridoxal phosphate)lysine. R372 is an L-aspartate binding site.

This sequence belongs to the class-I pyridoxal-phosphate-dependent aminotransferase family. As to quaternary structure, homodimer. The cofactor is pyridoxal 5'-phosphate.

It is found in the cytoplasm. The enzyme catalyses L-aspartate + 2-oxoglutarate = oxaloacetate + L-glutamate. The polypeptide is Aspartate aminotransferase (aspC) (Sulfurisphaera tokodaii (strain DSM 16993 / JCM 10545 / NBRC 100140 / 7) (Sulfolobus tokodaii)).